A 393-amino-acid polypeptide reads, in one-letter code: NAD(P)H-quinone oxidoreductase subunit H, chloroplastic (393 aa).

The protein belongs to the complex I 49 kDa subunit family. In terms of assembly, NDH is composed of at least 16 different subunits, 5 of which are encoded in the nucleus.

It localises to the plastid. It is found in the chloroplast thylakoid membrane. The catalysed reaction is a plastoquinone + NADH + (n+1) H(+)(in) = a plastoquinol + NAD(+) + n H(+)(out). It catalyses the reaction a plastoquinone + NADPH + (n+1) H(+)(in) = a plastoquinol + NADP(+) + n H(+)(out). Its function is as follows. NDH shuttles electrons from NAD(P)H:plastoquinone, via FMN and iron-sulfur (Fe-S) centers, to quinones in the photosynthetic chain and possibly in a chloroplast respiratory chain. The immediate electron acceptor for the enzyme in this species is believed to be plastoquinone. Couples the redox reaction to proton translocation, and thus conserves the redox energy in a proton gradient. The sequence is that of NAD(P)H-quinone oxidoreductase subunit H, chloroplastic from Cryptomeria japonica (Japanese cedar).